A 361-amino-acid chain; its full sequence is uncharacterized protein (361 aa).

The span at 1–10 (MRRYLKKAKP) shows a compositional bias: basic residues. Disordered regions lie at residues 1-82 (MRRY…SSFH) and 94-147 (ALSH…VNTS). 2 stretches are compositionally biased toward basic and acidic residues: residues 44–57 (KEKNSGKFRVKYEN) and 120–134 (FTKKEEDSSTKESEL). A compositionally biased stretch (polar residues) spans 135–147 (QTRSSPPLPVNTS). The stretch at 295–349 (NILTMDEQIQRLKEAIASEKLQQEERSQIIKSLMEEELEINEQEEKIKHSFIDLD) forms a coiled coil.

It is found in the cytoplasm. The protein localises to the nucleus. This is an uncharacterized protein from Schizosaccharomyces pombe (strain 972 / ATCC 24843) (Fission yeast).